Here is a 114-residue protein sequence, read N- to C-terminus: uncharacterized protein (114 aa).

Residues 1-37 (MLKKILSLFKKEEPKTEEKPTEVEEKKEEREEKEEKK) are disordered. A compositionally biased stretch (basic and acidic residues) spans 9–37 (FKKEEPKTEEKPTEVEEKKEEREEKEEKK).

This is an uncharacterized protein from Aquifex aeolicus (strain VF5).